The sequence spans 341 residues: Cyclic GMP-AMP synthase-like receptor (341 aa).

Residues Ser-64 and 77 to 79 (EFD) each bind ATP. Positions 77, 79, and 172 each coordinate Mg(2+). A GTP-binding site is contributed by Asp-172. Residues Lys-230 and 246–250 (SYHIK) each bind ATP. Glu-258 is a binding site for Mn(2+).

It belongs to the mab-21 family. Requires Mg(2+) as cofactor. The cofactor is Mn(2+).

The enzyme catalyses GTP + ATP = 2',3'-cGAMP + 2 diphosphate. It carries out the reaction GTP + ATP = pppGp(2'-5')A + diphosphate. The catalysed reaction is pppGp(2'-5')A = 2',3'-cGAMP + diphosphate. Nucleotidyltransferase that catalyzes the formation of cyclic GMP-AMP (2',3'-cGAMP) from ATP and GTP and plays a key role in innate immunity. Acts as a key sensor of double-stranded RNA (dsRNA), the presence of dsRNA in the cytoplasm being a danger signal that triggers the immune responses. Directly binds dsRNA, activating the nucleotidyltransferase activity, leading to synthesis of 2',3'-cGAMP, a second messenger that binds to and activates Sting, thereby triggering the immune response via activation of the NF-kappa-B transcription factor. This chain is Cyclic GMP-AMP synthase-like receptor, found in Hydra vulgaris (Hydra).